The sequence spans 451 residues: uncharacterized protein (451 aa).

A TRAM domain is found at M1–S59. S-adenosyl-L-methionine contacts are provided by Q283, Y312, E333, and D381. C408 (nucleophile) is an active-site residue.

This sequence belongs to the class I-like SAM-binding methyltransferase superfamily. RNA M5U methyltransferase family.

This is an uncharacterized protein from Streptococcus mutans serotype c (strain ATCC 700610 / UA159).